The primary structure comprises 236 residues: Orotidine 5'-phosphate decarboxylase (236 aa).

Substrate contacts are provided by residues Asp16, Lys38, 65–74 (DLKYHDIPNT), Thr124, Arg185, Gln194, Gly214, and Arg215. The Proton donor role is filled by Lys67.

It belongs to the OMP decarboxylase family. Type 1 subfamily. Homodimer.

It carries out the reaction orotidine 5'-phosphate + H(+) = UMP + CO2. It functions in the pathway pyrimidine metabolism; UMP biosynthesis via de novo pathway; UMP from orotate: step 2/2. Its function is as follows. Catalyzes the decarboxylation of orotidine 5'-monophosphate (OMP) to uridine 5'-monophosphate (UMP). The sequence is that of Orotidine 5'-phosphate decarboxylase from Hydrogenovibrio crunogenus (strain DSM 25203 / XCL-2) (Thiomicrospira crunogena).